Reading from the N-terminus, the 1098-residue chain is Probable DNA-directed RNA polymerase (1098 aa).

The segment covering 1–24 (PIRESVRVSTDRDPDLEDEKREQL) has biased composition (basic and acidic residues). Residues 1–26 (PIRESVRVSTDRDPDLEDEKREQLGE) are disordered. Catalysis depends on residues aspartate 663, lysine 750, and aspartate 915.

The protein belongs to the phage and mitochondrial RNA polymerase family.

Its subcellular location is the mitochondrion. The catalysed reaction is RNA(n) + a ribonucleoside 5'-triphosphate = RNA(n+1) + diphosphate. In terms of biological role, DNA-dependent RNA polymerase catalyzes the transcription of DNA into RNA using the four ribonucleoside triphosphates as substrates. The protein is Probable DNA-directed RNA polymerase of Zea mays (Maize).